Reading from the N-terminus, the 229-residue chain is Flagellar L-ring protein (229 aa).

An N-terminal signal peptide occupies residues 1–25 (MKQVRLPSSATVRAACAVAVAALAG). Cys26 is lipidated: N-palmitoyl cysteine. A lipid anchor (S-diacylglycerol cysteine) is attached at Cys26.

The protein belongs to the FlgH family. In terms of assembly, the basal body constitutes a major portion of the flagellar organelle and consists of four rings (L,P,S, and M) mounted on a central rod.

The protein resides in the cell outer membrane. It is found in the bacterial flagellum basal body. Functionally, assembles around the rod to form the L-ring and probably protects the motor/basal body from shearing forces during rotation. The chain is Flagellar L-ring protein from Burkholderia cenocepacia (strain ATCC BAA-245 / DSM 16553 / LMG 16656 / NCTC 13227 / J2315 / CF5610) (Burkholderia cepacia (strain J2315)).